The chain runs to 394 residues: Phosphoglycerate kinase (394 aa).

Residues 21–23 (DLN), Arg36, 59–62 (HLGR), Arg113, and Arg146 contribute to the substrate site. ATP contacts are provided by residues Lys197, Glu319, and 345 to 348 (GGDT).

Belongs to the phosphoglycerate kinase family. Monomer.

Its subcellular location is the cytoplasm. The catalysed reaction is (2R)-3-phosphoglycerate + ATP = (2R)-3-phospho-glyceroyl phosphate + ADP. It participates in carbohydrate degradation; glycolysis; pyruvate from D-glyceraldehyde 3-phosphate: step 2/5. This chain is Phosphoglycerate kinase, found in Halorhodospira halophila (strain DSM 244 / SL1) (Ectothiorhodospira halophila (strain DSM 244 / SL1)).